A 416-amino-acid polypeptide reads, in one-letter code: Protein-lysine N-trimethyltransferase SMYD5 (416 aa).

The SET domain maps to 21 to 351 (GSVEVRYVDS…PGEEICISYL (331 aa)). The MYND-type zinc-finger motif lies at 98–136 (PELCSVRKDLHQNCPHCQVMYCSAECRLAAAEQYHQILC). Tyr-350 contributes to the S-adenosyl-L-methionine binding site. The segment at 383 to 416 (EADDPNVTSEEEEEEDEEEGEPEDAELGDEMTDV) is disordered.

The protein belongs to the class V-like SAM-binding methyltransferase superfamily. Interacts with the N-CoR complex. Interacts with EHMT2 and CBX5. In terms of processing, ubiquitinated and degradaed by the proteasome in response to mild hypothermia (32 degrees Celsius), relieving repression of the SP1 gene.

Its subcellular location is the cytoplasm. It carries out the reaction L-lysyl-[protein] + 3 S-adenosyl-L-methionine = N(6),N(6),N(6)-trimethyl-L-lysyl-[protein] + 3 S-adenosyl-L-homocysteine + 3 H(+). It catalyses the reaction L-lysyl(20)-[histone H4] + 3 S-adenosyl-L-methionine = N(6),N(6),N(6)-trimethyl-L-lysyl(20)-[histone H4] + 3 S-adenosyl-L-homocysteine + 3 H(+). The catalysed reaction is L-lysyl(36)-[histone H3] + 3 S-adenosyl-L-methionine = N(6),N(6),N(6)-trimethyl-L-lysyl(36)-[histone H3] + 3 S-adenosyl-L-homocysteine + 3 H(+). Protein-lysine N-trimethyltransferase that specifically catalyzes trimethylation of 'Lys-22' of the RPL40/eL40 subunit of the 60S ribosome, thereby promoting translation elongation and protein synthesis. May also act as a histone methyltransferase in the context of histone octamers, but not on nucleosome substrates: trimethylates 'Lys-36' of histone H3 and 'Lys-20' of histone H4 to form H3K36me3 and H4K20me3, respectively. The histone methyltransferase activity, which is independent of its SET domain, is however unsure in vivo. In association with the NCoR corepressor complex, involved in the repression of toll-like receptor 4 (TLR4)-target inflammatory genes in macrophages, possibly by catalyzing the formation of H4K20me3 at the gene promoters. Plays an important role in embryonic stem (ES) cell self-renewal and differentiation. Maintains genome stability of ES cells during differentiation through regulation of heterochromatin formation and repression of endogenous repetitive DNA elements by promoting H4K20me3 marks. Acts as a regulator of the hypothermia response: its degradation in response to mild hypothermia relieves the formation of H3K36me3 at gene promoters, allowing expression of the neuroprotective gene SP1. The protein is Protein-lysine N-trimethyltransferase SMYD5 of Mus musculus (Mouse).